Reading from the N-terminus, the 180-residue chain is Inner membrane-spanning protein YciB (180 aa).

The next 5 helical transmembrane spans lie at 22 to 42, 50 to 70, 72 to 92, 121 to 141, and 149 to 169; these read IFVASGALIVATLVALAFTWL, MTLVTAAMVLVFGTLTLAFHS, LFIKWKVTVLYVLFALALLVS, LSWAIFFLVCGLLNIYVAFWL, and FKVFGLTALTLIFTLISGVYI.

The protein belongs to the YciB family.

It is found in the cell inner membrane. Functionally, plays a role in cell envelope biogenesis, maintenance of cell envelope integrity and membrane homeostasis. The polypeptide is Inner membrane-spanning protein YciB (Yersinia pseudotuberculosis serotype O:1b (strain IP 31758)).